The chain runs to 29 residues: Varv peptide E (29 aa).

A cross-link (cyclopeptide (Gly-Asn)) is located at residues Gly-1–Asn-29. Cystine bridges form between Cys-5/Cys-19, Cys-9/Cys-21, and Cys-14/Cys-26.

In terms of processing, this is a cyclic peptide.

Its function is as follows. Probably participates in a plant defense mechanism. Has cytotoxic activity against human lymphoma U-937 GTB and human myeloma RPMI-8226/s cell lines. The sequence is that of Varv peptide E from Viola arvensis (European field pansy).